A 396-amino-acid polypeptide reads, in one-letter code: Probable sugar efflux transporter (396 aa).

12 helical membrane-spanning segments follow: residues 15-35 (VVTL…PVGL), 50-70 (VGIM…PFML), 81-101 (LICL…SWSF), 103-123 (VLVI…SITA), 136-156 (AQAL…GLPL), 170-190 (FFAI…LLPL), 209-229 (PALM…YTAY), 246-266 (FATA…VIFG), 275-295 (TLVS…LPAA), 299-319 (IHLG…GLGM), 333-353 (VAMA…ALVG), and 364-384 (MIGY…IIIF).

Belongs to the major facilitator superfamily. SotB (TC 2.A.1.2) family.

Its subcellular location is the cell inner membrane. Involved in the efflux of sugars. The physiological role may be the reduction of the intracellular concentration of toxic sugars or sugar metabolites. This is Probable sugar efflux transporter from Escherichia coli (strain SMS-3-5 / SECEC).